Reading from the N-terminus, the 271-residue chain is Glutamate racemase (271 aa).

Substrate is bound by residues 10–11 (DS) and 42–43 (YG). Residue Cys-73 is the Proton donor/acceptor of the active site. Substrate is bound at residue 74–75 (NT). The active-site Proton donor/acceptor is the Cys-183. Residue 184 to 185 (TH) coordinates substrate.

This sequence belongs to the aspartate/glutamate racemases family.

It catalyses the reaction L-glutamate = D-glutamate. Its pathway is cell wall biogenesis; peptidoglycan biosynthesis. Provides the (R)-glutamate required for cell wall biosynthesis. In Streptococcus thermophilus (strain CNRZ 1066), this protein is Glutamate racemase.